Consider the following 304-residue polypeptide: Probable porphobilinogen deaminase (304 aa).

Residue C240 is modified to S-(dipyrrolylmethanemethyl)cysteine.

Belongs to the HMBS family. Dipyrromethane serves as cofactor.

The catalysed reaction is 4 porphobilinogen + H2O = hydroxymethylbilane + 4 NH4(+). The protein operates within porphyrin-containing compound metabolism; protoporphyrin-IX biosynthesis; coproporphyrinogen-III from 5-aminolevulinate: step 2/4. Its function is as follows. Tetrapolymerization of the monopyrrole PBG into the hydroxymethylbilane pre-uroporphyrinogen in several discrete steps. The polypeptide is Probable porphobilinogen deaminase (Ignicoccus hospitalis (strain KIN4/I / DSM 18386 / JCM 14125)).